The primary structure comprises 493 residues: Cytochrome P450 2A9 (493 aa).

A heme-binding site is contributed by C438.

It belongs to the cytochrome P450 family. The cofactor is heme. In terms of tissue distribution, liver.

The protein resides in the endoplasmic reticulum membrane. It is found in the microsome membrane. It catalyses the reaction an organic molecule + reduced [NADPH--hemoprotein reductase] + O2 = an alcohol + oxidized [NADPH--hemoprotein reductase] + H2O + H(+). Functionally, cytochromes P450 are a group of heme-thiolate monooxygenases. In liver microsomes, this enzyme is involved in an NADPH-dependent electron transport pathway. It oxidizes a variety of structurally unrelated compounds, including steroids, fatty acids, and xenobiotics. The sequence is that of Cytochrome P450 2A9 (CYP2A9) from Mesocricetus auratus (Golden hamster).